A 311-amino-acid polypeptide reads, in one-letter code: MKWSELSIHTTHEAVEPISNILHEAGASGVVIEDPLDLIKERENVYGEIYQLDPNDYPDEGVIVKAYLPVNSFLGETVDGIKETINNLLLYNIDLGRNHITISEVNEEEWATAWKKYYHPVKISEKFTIVPTWEEYTPVHTDELIIEMDPGMAFGTGTHPTTVLCIQALERFVQKGDKVIDVGTGSGILSIAAAMLEAESVHAYDLDPVAVESARLNLKLNKVSDIAQVKQNNLLDGIEGEHDVIVANILAEVILRFTSQAYSLLKEGGHFITSGIIGHKKQEVKEALEQAGFTIVEILSMEDWVSIIAKK.

S-adenosyl-L-methionine is bound by residues Thr162, Gly183, Asp205, and Asn248.

It belongs to the methyltransferase superfamily. PrmA family.

The protein resides in the cytoplasm. It carries out the reaction L-lysyl-[protein] + 3 S-adenosyl-L-methionine = N(6),N(6),N(6)-trimethyl-L-lysyl-[protein] + 3 S-adenosyl-L-homocysteine + 3 H(+). Its function is as follows. Methylates ribosomal protein L11. The polypeptide is Ribosomal protein L11 methyltransferase (Bacillus subtilis (strain 168)).